Reading from the N-terminus, the 121-residue chain is MACETERTPLGVFKCQLCALTAPYSYQGRQPPDSQSVVLLEESYVMRDPFTPDKGRFLVVGSRCSMCGRLVCVGPECSLFYSKRFCLPCVQDNVDAFPQEIQQDLEKRKVPFTRPASQRSS.

This sequence belongs to the CDPF1 family.

This chain is Cysteine-rich DPF motif domain-containing protein 1 (CDPF1), found in Bos taurus (Bovine).